The chain runs to 419 residues: MRVAMISMHTSPLEQPGTGDAGGMNVYVKNIAEQLERRGVIVDVFTRATRPLQGEVVNVRPGLRVINCVAGPYEGLSKEELPTQLAAFTGSILAFCREEGVSYDLIHSHYWLSGQVGWLLRDLWQVPWVHTAHTLAAVKNNSLADGDSREPESRRICEQQIVDNADLLIVNTDQEVQDLIEGYDATTCAIRVVPPGADVDRFTPGSDRATERSRRELGIPFRTKVIGFVGRLQRLKGPQVLLRAVAELLDRHPQQQLAVVICGGSSGAGGNELERLQLLAEELGISRCVRFLAPRPPEELVGVYRAADIVAVPSYNESFGLVALEAQACGTPVVATRTGGLPIAVDGGKSGLLVDGHDPSDWADALGKLVLDDDLRIAMGEYAPSHAAKFSWQASAEALHKLYEELPPAGHRGERQPAG.

His-9 contributes to the 1D-myo-inositol 3-phosphate binding site. Residues 15-16 (QP) and Gly-23 contribute to the UDP-N-acetyl-alpha-D-glucosamine site. Residues 20–25 (DAGGMN), Lys-78, Tyr-110, Thr-134, and Arg-154 contribute to the 1D-myo-inositol 3-phosphate site. UDP-N-acetyl-alpha-D-glucosamine contacts are provided by Arg-231, Lys-236, and Arg-295. 3 residues coordinate Mg(2+): Tyr-304, Arg-305, and Ala-307. Positions 317 and 325 each coordinate UDP-N-acetyl-alpha-D-glucosamine. Thr-331 contacts Mg(2+).

This sequence belongs to the glycosyltransferase group 1 family. MshA subfamily. In terms of assembly, homodimer.

It carries out the reaction 1D-myo-inositol 3-phosphate + UDP-N-acetyl-alpha-D-glucosamine = 1D-myo-inositol 2-acetamido-2-deoxy-alpha-D-glucopyranoside 3-phosphate + UDP + H(+). In terms of biological role, catalyzes the transfer of a N-acetyl-glucosamine moiety to 1D-myo-inositol 3-phosphate to produce 1D-myo-inositol 2-acetamido-2-deoxy-glucopyranoside 3-phosphate in the mycothiol biosynthesis pathway. This chain is D-inositol 3-phosphate glycosyltransferase, found in Corynebacterium jeikeium (strain K411).